Here is a 122-residue protein sequence, read N- to C-terminus: Ribosome-binding factor A (122 aa).

It belongs to the RbfA family. In terms of assembly, monomer. Binds 30S ribosomal subunits, but not 50S ribosomal subunits or 70S ribosomes.

Its subcellular location is the cytoplasm. Its function is as follows. One of several proteins that assist in the late maturation steps of the functional core of the 30S ribosomal subunit. Associates with free 30S ribosomal subunits (but not with 30S subunits that are part of 70S ribosomes or polysomes). Required for efficient processing of 16S rRNA. May interact with the 5'-terminal helix region of 16S rRNA. The chain is Ribosome-binding factor A from Prosthecochloris aestuarii (strain DSM 271 / SK 413).